Reading from the N-terminus, the 142-residue chain is Protein lin-32 (142 aa).

The segment covering Pro-30 to Ser-48 has biased composition (polar residues). A disordered region spans residues Pro-30–Ser-66. Residues Met-72–Leu-124 form the bHLH domain.

As to quaternary structure, forms a heterodimer with hlh-2. In terms of tissue distribution, expressed in PVD motor neurons.

The protein resides in the nucleus. Probable transcription factor which binds the E box motif 5'-CA[TC][AG]TG-3'. Essential for the specification of the neuroblast cell fate in the development of peripheral sense organs. Its role in the generation of sensory neurons may be through positively regulating the expression of the zinc finger protein ztf-11 during postdeirid neurogenesis. Required for specification of cell fate, acting in concert with lin-32, in the development of the male-specific genital sensilla (simple sense organs) known as rays. Involved in regulating glial specification, perhaps by suppressing a glial fate in different lineages during early embryogenesis. The protein is Protein lin-32 of Caenorhabditis elegans.